We begin with the raw amino-acid sequence, 471 residues long: Glutamate--tRNA ligase (471 aa).

Positions 9–19 (PSPTGYLHVGG) match the 'HIGH' region motif. Residues C98, C100, C125, and H127 each contribute to the Zn(2+) site. The short motif at 237–241 (KLSKR) is the 'KMSKS' region element. K240 serves as a coordination point for ATP.

Belongs to the class-I aminoacyl-tRNA synthetase family. Glutamate--tRNA ligase type 1 subfamily. In terms of assembly, monomer. It depends on Zn(2+) as a cofactor.

The protein resides in the cytoplasm. The enzyme catalyses tRNA(Glu) + L-glutamate + ATP = L-glutamyl-tRNA(Glu) + AMP + diphosphate. Functionally, catalyzes the attachment of glutamate to tRNA(Glu) in a two-step reaction: glutamate is first activated by ATP to form Glu-AMP and then transferred to the acceptor end of tRNA(Glu). The sequence is that of Glutamate--tRNA ligase from Escherichia coli (strain SMS-3-5 / SECEC).